The following is a 363-amino-acid chain: 5-formaminoimidazole-4-carboxamide-1-(beta)-D-ribofuranosyl 5'-monophosphate synthetase (363 aa).

Residues His29 and Ser96 each contribute to the 5-amino-1-(5-phospho-beta-D-ribosyl)imidazole-4-carboxamide site. In terms of domain architecture, ATP-grasp spans 118–354 (RDILRWEAER…ISREIKNAIE (237 aa)). ATP contacts are provided by residues 148–210 (PEDI…TNFC) and Glu232. Asn260 provides a ligand contact to 5-amino-1-(5-phospho-beta-D-ribosyl)imidazole-4-carboxamide. Gln299 and Glu312 together coordinate Mg(2+).

The protein belongs to the phosphohexose mutase family. Requires Mg(2+) as cofactor. It depends on Mn(2+) as a cofactor.

The enzyme catalyses 5-amino-1-(5-phospho-beta-D-ribosyl)imidazole-4-carboxamide + formate + ATP = 5-formamido-1-(5-phospho-D-ribosyl)imidazole-4-carboxamide + ADP + phosphate. The protein operates within purine metabolism; IMP biosynthesis via de novo pathway; 5-formamido-1-(5-phospho-D-ribosyl)imidazole-4-carboxamide from 5-amino-1-(5-phospho-D-ribosyl)imidazole-4-carboxamide (formate route): step 1/1. Its function is as follows. Catalyzes the ATP- and formate-dependent formylation of 5-aminoimidazole-4-carboxamide-1-beta-d-ribofuranosyl 5'-monophosphate (AICAR) to 5-formaminoimidazole-4-carboxamide-1-beta-d-ribofuranosyl 5'-monophosphate (FAICAR) in the absence of folates. The polypeptide is 5-formaminoimidazole-4-carboxamide-1-(beta)-D-ribofuranosyl 5'-monophosphate synthetase (Methanosphaera stadtmanae (strain ATCC 43021 / DSM 3091 / JCM 11832 / MCB-3)).